The chain runs to 886 residues: 3',5'-cyclic-AMP phosphodiesterase 4A (886 aa).

Positions 1 to 128 (MEPPTVPSER…GRSPLDSQAS (128 aa)) are disordered. Serine 13 is modified (phosphoserine). A compositionally biased stretch (low complexity) spans 36–46 (QPRTPIRIQQR). A compositionally biased stretch (basic and acidic residues) spans 51-78 (SAERAERERQPHRPIERADAMDTSDRPG). Residues 93 to 104 (TGTGSGGAGGGS) show a composition bias toward gly residues. Phosphoserine is present on residues glycine 119 and leucine 123. Serine 152 bears the Phosphoserine; by MAPKAPK2 mark. 3 positions are modified to phosphoserine: serine 157, serine 165, and serine 209. Residues 294–331 (KQNEVEIPSPTMKEREKQQAPRPRPSQPPPPPVPHLQP) are disordered. The segment covering 315–328 (RPRPSQPPPPPVPH) has biased composition (pro residues). At serine 346 the chain carries Phosphoserine. Residues 357 to 686 (VKTDQEELLA…DWYYSAIRQS (330 aa)) form the PDEase domain. Lysine 358 participates in a covalent cross-link: Glycyl lysine isopeptide (Lys-Gly) (interchain with G-Cter in SUMO). Histidine 433 (proton donor) is an active-site residue. Histidine 433 is a 3',5'-cyclic AMP binding site. AMP-binding residues include histidine 433 and histidine 437. The Zn(2+) site is built by histidine 437, histidine 473, aspartate 474, and aspartate 591. AMP contacts are provided by aspartate 474, aspartate 591, glutamine 642, and phenylalanine 645. Residue aspartate 474 coordinates Mg(2+). Aspartate 474 is a binding site for Mn(2+). The 3',5'-cyclic AMP site is built by glutamine 642 and phenylalanine 645. Disordered stretches follow at residues 682–705 (AIRQ…PLPD) and 866–886 (FGED…GDPT). Serine 686 and serine 688 each carry phosphoserine. Residues 876-886 (PGGGGSGGDPT) are compositionally biased toward gly residues.

The protein belongs to the cyclic nucleotide phosphodiesterase family. PDE4 subfamily. As to quaternary structure, interacts with LYN (via SH3 domain). Interacts with ARRB2. The cofactor is Zn(2+). Mg(2+) is required as a cofactor. Mn(2+) serves as cofactor. Post-translationally, proteolytically cleaved by CASP3. In terms of processing, phosphorylated at Ser-119 by PKA. As to expression, expressed in lymphoid cell subsets including CD8-positive T cells and T-helper 2 cells. Expressed in dendritic cells. Highly expressed in liver, stomach, testis, thyroid and adrenal glands and at a lower extent in placenta, kidney, pancreas, ovary, uterus and skin. Expressed in myeloid cell subsets including dendritic cells, monocytes, macrophages, eosinophils and mast cells. Expressed in natural killer cells. Expressed in bronchial smooth muscle. In terms of tissue distribution, expressed at high levels in the heart and small intestine. It is also found in the brain, kidney, spleen, colon, salivary gland, ovary and peripheral blood lymphocytes. As to expression, expressed predominantly in skeletal muscle and brain and at lower levels in the testis. Found in specific neuronal subpopulations including cortical pyramidal neurons, horn neurons in the spinal cord and Purkinje cells in cerebellum (at protein level).

Its subcellular location is the cytoplasm. It localises to the perinuclear region. The protein resides in the cell projection. The protein localises to the ruffle membrane. It is found in the cytosol. Its subcellular location is the membrane. The enzyme catalyses 3',5'-cyclic AMP + H2O = AMP + H(+). It participates in purine metabolism; 3',5'-cyclic AMP degradation; AMP from 3',5'-cyclic AMP: step 1/1. Inhibited by rolipram, cilomilast, Ro 20-1724, roflumilast and denbufylline. Its activity is regulated as follows. Inhibited by rolipram. With respect to regulation, inhibited by rolipram and cilomilast. Its function is as follows. Hydrolyzes the second messenger 3',5'-cyclic AMP (cAMP), which is a key regulator of many important physiological processes. Efficiently hydrolyzes cAMP. Functionally, efficiently hydrolyzes cAMP. The phosphodiesterase activity is not affected by calcium, calmodulin or cyclic GMP (cGMP) levels. Does not hydrolyze cGMP. The sequence is that of 3',5'-cyclic-AMP phosphodiesterase 4A (PDE4A) from Homo sapiens (Human).